The sequence spans 205 residues: Small ribosomal subunit protein uS4 (205 aa).

The disordered stretch occupies residues 17-46 (ENIWGRPKSPVNKREYGPGQHGQRRKGKLS). In terms of domain architecture, S4 RNA-binding spans 94 to 157 (SRLDAVVYRA…KQLVIVLESV (64 aa)).

It belongs to the universal ribosomal protein uS4 family. In terms of assembly, part of the 30S ribosomal subunit. Contacts protein S5. The interaction surface between S4 and S5 is involved in control of translational fidelity.

Its function is as follows. One of the primary rRNA binding proteins, it binds directly to 16S rRNA where it nucleates assembly of the body of the 30S subunit. In terms of biological role, with S5 and S12 plays an important role in translational accuracy. The chain is Small ribosomal subunit protein uS4 from Mesorhizobium japonicum (strain LMG 29417 / CECT 9101 / MAFF 303099) (Mesorhizobium loti (strain MAFF 303099)).